The sequence spans 248 residues: PF03932 family protein CutC (248 aa).

Belongs to the CutC family. Homodimer.

It is found in the cytoplasm. This Salmonella typhimurium (strain LT2 / SGSC1412 / ATCC 700720) protein is PF03932 family protein CutC.